A 419-amino-acid polypeptide reads, in one-letter code: 2-amino-3-ketobutyrate coenzyme A ligase, mitochondrial (419 aa).

Residues Met1–Gln21 constitute a mitochondrion transit peptide. Lys45 is modified (N6-acetyllysine; alternate). Residue Lys45 is modified to N6-succinyllysine; alternate. Cys134–Tyr135 contacts pyridoxal 5'-phosphate. Residue His159 coordinates substrate. Lys187 carries the N6-acetyllysine; alternate modification. N6-succinyllysine; alternate is present on Lys187. Pyridoxal 5'-phosphate contacts are provided by residues Ser206, Thr262–Lys265, and Ser295–Asn296. Residue Lys265 is modified to N6-(pyridoxal phosphate)lysine. An N6-succinyllysine mark is found at Lys326 and Lys368. Lys383 carries the post-translational modification N6-acetyllysine; alternate. Lys383 is modified (N6-succinyllysine; alternate). Arg389 provides a ligand contact to substrate.

Belongs to the class-II pyridoxal-phosphate-dependent aminotransferase family. Pyridoxal 5'-phosphate serves as cofactor. In terms of tissue distribution, strongly expressed in heart, brain, liver and pancreas. Also found in lung.

The protein localises to the mitochondrion. Its subcellular location is the nucleus. The enzyme catalyses glycine + acetyl-CoA = (2S)-2-amino-3-oxobutanoate + CoA. Its function is as follows. Pyridoxal phosphate (PLP) dependent enzyme, which catalyzes the cleavage of 2-amino-3-oxobutanoate to glycine and acetyl-CoA. This is 2-amino-3-ketobutyrate coenzyme A ligase, mitochondrial from Homo sapiens (Human).